A 547-amino-acid chain; its full sequence is Chaperonin GroEL (547 aa).

Residues Thr-30 to Pro-33, Lys-51, Asp-87 to Thr-91, Gly-415, Asn-479 to Ala-481, and Asp-495 each bind ATP. Positions Ala-524–Phe-547 are disordered. Residues Ala-535–Phe-547 show a composition bias toward gly residues.

Belongs to the chaperonin (HSP60) family. Forms a cylinder of 14 subunits composed of two heptameric rings stacked back-to-back. Interacts with the co-chaperonin GroES.

The protein localises to the cytoplasm. The enzyme catalyses ATP + H2O + a folded polypeptide = ADP + phosphate + an unfolded polypeptide.. Its function is as follows. Together with its co-chaperonin GroES, plays an essential role in assisting protein folding. The GroEL-GroES system forms a nano-cage that allows encapsulation of the non-native substrate proteins and provides a physical environment optimized to promote and accelerate protein folding. The polypeptide is Chaperonin GroEL (Xylella fastidiosa (strain M23)).